The primary structure comprises 146 residues: Protein LDOC1 (146 aa).

Belongs to the LDOC1 family. In terms of assembly, interacts with NOD2. Ubiquitously expressed with high levels in brain ant thyroid and low expression in placenta, liver and leukocytes. Expressed as well in six of the seven human breast cancer cell lines examined.

The protein resides in the nucleus. Functionally, may have an important role in the development and/or progression of some cancers. This is Protein LDOC1 (LDOC1) from Homo sapiens (Human).